The chain runs to 451 residues: Probable plasmid replicative DNA helicase (451 aa).

The SF4 helicase domain occupies 194 to 451 (QNSFFDAFPT…SKFSAIKKVW (258 aa)). 225-232 (ARPSIGKT) contacts ATP.

Belongs to the helicase family. DnaB subfamily. As to quaternary structure, homohexamer.

It catalyses the reaction Couples ATP hydrolysis with the unwinding of duplex DNA at the replication fork by translocating in the 5'-3' direction. This creates two antiparallel DNA single strands (ssDNA). The leading ssDNA polymer is the template for DNA polymerase III holoenzyme which synthesizes a continuous strand.. It carries out the reaction ATP + H2O = ADP + phosphate + H(+). In terms of biological role, a replicative DNA helicase, it participates in initiation and elongation during DNA replication. Travels ahead of the DNA replisome, separating dsDNA into templates for DNA synthesis. A processive ATP-dependent 5'-3' DNA helicase it has DNA-dependent ATPase activity. Functionally, the plasmid this protein is encoded on is thought to be required for growth within mammalian cells. The sequence is that of Probable plasmid replicative DNA helicase from Chlamydia trachomatis serovar L2 (strain ATCC VR-902B / DSM 19102 / 434/Bu).